Consider the following 1439-residue polypeptide: Microtubule organization protein AKNA (1439 aa).

2 stretches are compositionally biased toward basic and acidic residues: residues 1-10 and 25-35; these read MASSETEIRW and AWAEDKRDVDR. The interval 1–394 is disordered; it reads MASSETEIRW…NRKPQAPARP (394 aa). Phosphoserine is present on Ser52. Positions 71-83 are enriched in basic and acidic residues; the sequence is WDPHPQPDGHQDS. The span at 89–99 shows a compositional bias: acidic residues; the sequence is SGEEAEAEDVD. Polar residues predominate over residues 263–275; the sequence is QDSSAPPAQSPQH. Basic and acidic residues predominate over residues 276–285; that stretch reads ATDRWRRETT. Phosphoserine is present on residues Ser316, Ser499, and Ser534. Disordered stretches follow at residues 507 to 562 and 659 to 682; these read SAEW…SAEQ and IDQT…PALP. A compositionally biased stretch (low complexity) spans 533–544; it reads LSPSSLTSMPTL. Residues Ser767 and Ser770 each carry the phosphoserine modification. A PEST region spans residues 771-804; it reads LPEAMRMEEEEEGEEEEEEEGGGDSLEVDGVAAT. Disordered stretches follow at residues 775–942 and 977–1005; these read MRME…QTPE and IPRR…LRQR. The segment covering 778-792 has biased composition (acidic residues); the sequence is EEEEEGEEEEEEEGG. Ser848 is modified (phosphoserine). A compositionally biased stretch (pro residues) spans 865 to 875; that stretch reads PPGPGVPPHPP. 3 stretches are compositionally biased toward polar residues: residues 879–891, 929–940, and 983–999; these read SAAS…TSLE, SETSRVSPLTQT, and EPST…SSPS. A Phosphoserine modification is found at Ser886. A PEST region spans residues 911–932; the sequence is HLEETWMASPETDSGFVGSETS. Residues Ser997 and Ser1010 each carry the phosphoserine modification. The disordered stretch occupies residues 1095–1165; sequence LHQPLQGSPT…RARSSSVPRE (71 aa). Residues 1115–1123 constitute a DNA-binding region (a.T hook); the sequence is RTRGRPADS. The span at 1135–1147 shows a compositional bias: basic and acidic residues; sequence STERLPGEPRGEE. Phosphoserine occurs at positions 1172 and 1173. The segment at 1180–1211 is disordered; the sequence is LPLFSEKSKTTKDSPQAARDGKRGVGSAGWPD. Position 1228 is a phosphoserine (Ser1228). Residues 1252-1329 are disordered; sequence AGGAVTGDPL…RPPPGLWYLA (78 aa). Over residues 1303–1317 the composition is skewed to polar residues; sequence SSTPSPKQRSKQAGS. Ser1377, Ser1387, and Ser1424 each carry phosphoserine.

This sequence belongs to the AKNA family. As to quaternary structure, interacts with DCTN1. Interacts with MAPRE1/EB1. Interacts with ODF2. Interacts with CAMSAP3. In terms of processing, phosphorylated; phosphorylation regulates dissociation from and reassembly at the centrosome. Predominantly expressed by lymphoid tissues. Highly expressed in the spleen, lymph nodes and peripheral blood leukocytes, expressed at lower level in the thymus. Mainly expressed by germinal center B-lymphocytes, a stage in which receptor and ligand interactions are crucial for B-lymphocyte maturation. Expressed by B- and T-lymphocytes, Natural killer cells and CD1a(+)CD14(-) but not CD1a(-)CD14(+) dendritic cells. Weakly or not expressed in fetal liver and in adult bone marrow.

The protein resides in the cytoplasm. It localises to the cytoskeleton. It is found in the microtubule organizing center. The protein localises to the centrosome. Its subcellular location is the centriole. The protein resides in the nucleus. Centrosomal protein that plays a key role in cell delamination by regulating microtubule organization. Required for the delamination and retention of neural stem cells from the subventricular zone during neurogenesis. Also regulates the epithelial-to-mesenchymal transition in other epithelial cells. Acts by increasing centrosomal microtubule nucleation and recruiting nucleation factors and minus-end stabilizers, thereby destabilizing microtubules at the adherens junctions and mediating constriction of the apical endfoot. In addition, may also act as a transcription factor that specifically activates the expression of the CD40 receptor and its ligand CD40L/CD154, two cell surface molecules on lymphocytes that are critical for antigen-dependent-B-cell development. Binds to A/T-rich promoters. It is unclear how it can both act as a microtubule organizer and as a transcription factor; additional evidences are required to reconcile these two apparently contradictory functions. The protein is Microtubule organization protein AKNA of Homo sapiens (Human).